A 416-amino-acid polypeptide reads, in one-letter code: Actin-like protein 9 (416 aa).

Residues 1–23 form a disordered region; that stretch reads MDPNQGNPLEPQDSPEIPKPSLN.

The protein belongs to the actin family. In terms of assembly, interacts with ACTL7A.

The protein resides in the cytoplasmic vesicle. Its subcellular location is the secretory vesicle. It is found in the acrosome. It localises to the cytoplasm. The protein localises to the cytoskeleton. The protein resides in the perinuclear theca. Its function is as follows. Testis-specic protein that plays an important role in fusion of proacrosomal vesicles and perinuclear theca formation. This Bos taurus (Bovine) protein is Actin-like protein 9 (ACTL9).